Here is a 137-residue protein sequence, read N- to C-terminus: uncharacterized protein (137 aa).

This is an uncharacterized protein from Bacillus subtilis (strain 168).